Here is a 240-residue protein sequence, read N- to C-terminus: NDR1/HIN1-like protein 2 (240 aa).

The chain crosses the membrane as a helical span at residues 57 to 77 (NILIAVAVILGVAALILWLIF). N-linked (GlcNAc...) asparagine glycosylation is found at N109, N141, N151, and N223.

Expressed at low levels in roots, rosette leaves, cauline leaves, stems, flowers and siliques.

It is found in the cell membrane. May play a role in plant immunity. In Arabidopsis thaliana (Mouse-ear cress), this protein is NDR1/HIN1-like protein 2.